The following is a 352-amino-acid chain: Photosystem II D2 protein (352 aa).

The chain crosses the membrane as a helical span at residues 40–60; sequence CAYMALGGWLTGTTFVTSWYT. His117 serves as a coordination point for chlorophyll a. A helical transmembrane segment spans residues 124-140; sequence GFMLRQFEIARLVGIRP. Positions 129 and 142 each coordinate pheophytin a. The helical transmembrane segment at 152-165 threads the bilayer; that stretch reads VFVSVFLMYPLGQS. Position 197 (His197) interacts with chlorophyll a. Residues 207 to 227 traverse the membrane as a helical segment; that stretch reads GALLCAIHGATVENTLFEDGD. Positions 214 and 261 each coordinate a plastoquinone. Fe cation is bound at residue His214. Residue His268 coordinates Fe cation. The helical transmembrane segment at 278 to 294 threads the bilayer; the sequence is GLWTSSIGIIGLALNLR.

This sequence belongs to the reaction center PufL/M/PsbA/D family. As to quaternary structure, PSII is composed of 1 copy each of membrane proteins PsbA, PsbB, PsbC, PsbD, PsbE, PsbF, PsbH, PsbI, PsbJ, PsbK, PsbL, PsbM, PsbT, PsbX, PsbY, PsbZ, Psb30/Ycf12, peripheral proteins PsbO, CyanoQ (PsbQ), PsbU, PsbV and a large number of cofactors. It forms dimeric complexes. It depends on The D1/D2 heterodimer binds P680, chlorophylls that are the primary electron donor of PSII, and subsequent electron acceptors. It shares a non-heme iron and each subunit binds pheophytin, quinone, additional chlorophylls, carotenoids and lipids. There is also a Cl(-1) ion associated with D1 and D2, which is required for oxygen evolution. The PSII complex binds additional chlorophylls, carotenoids and specific lipids. as a cofactor.

Its subcellular location is the cellular thylakoid membrane. The catalysed reaction is 2 a plastoquinone + 4 hnu + 2 H2O = 2 a plastoquinol + O2. Functionally, photosystem II (PSII) is a light-driven water:plastoquinone oxidoreductase that uses light energy to abstract electrons from H(2)O, generating O(2) and a proton gradient subsequently used for ATP formation. It consists of a core antenna complex that captures photons, and an electron transfer chain that converts photonic excitation into a charge separation. The D1/D2 (PsbA/PsbD) reaction center heterodimer binds P680, the primary electron donor of PSII as well as several subsequent electron acceptors. D2 is needed for assembly of a stable PSII complex. This chain is Photosystem II D2 protein, found in Synechococcus sp. (strain RCC307).